The following is a 1010-amino-acid chain: Protein translocase subunit SecA (1010 aa).

Residues glutamine 86, 104 to 108 (GEGKT), and aspartate 535 each bind ATP. Low complexity predominate over residues 893-904 (QAGAADGNAKGA). The interval 893–916 (QAGAADGNAKGARTVRHSVRLPGR) is disordered. 4 residues coordinate Zn(2+): cysteine 920, cysteine 922, cysteine 931, and histidine 932. Low complexity predominate over residues 950 to 981 (QHAAVAADTPAQPAPQATATRPPTSQVPRGRA). The segment at 950–1010 (QHAAVAADTP…RGKGASARKK (61 aa)) is disordered.

It belongs to the SecA family. As to quaternary structure, monomer and homodimer. Part of the essential Sec protein translocation apparatus which comprises SecA, SecYEG and auxiliary proteins SecDF. Other proteins may also be involved. It depends on Zn(2+) as a cofactor.

Its subcellular location is the cell membrane. It localises to the cytoplasm. It catalyses the reaction ATP + H2O + cellular proteinSide 1 = ADP + phosphate + cellular proteinSide 2.. Part of the Sec protein translocase complex. Interacts with the SecYEG preprotein conducting channel. Has a central role in coupling the hydrolysis of ATP to the transfer of proteins into and across the cell membrane, serving as an ATP-driven molecular motor driving the stepwise translocation of polypeptide chains across the membrane. This chain is Protein translocase subunit SecA, found in Roseiflexus sp. (strain RS-1).